The chain runs to 227 residues: Cytochrome c oxidase subunit 2 (227 aa).

Topologically, residues 1–14 (MPYPLQLGFQDATS) are mitochondrial intermembrane. Residues 15 to 45 (PIMEELLHFHDHTLMIVFLISSLVLYIITLM) traverse the membrane as a helical segment. Over 46 to 59 (LTTKLTHTSTMDAQ) the chain is Mitochondrial matrix. A helical membrane pass occupies residues 60 to 87 (EVETVWTILPAVILILIALPSLRILYMM). Residues 88–227 (DEINNPLLTI…HFEDWSTSML (140 aa)) lie on the Mitochondrial intermembrane side of the membrane. Cu cation is bound by residues H161, C196, E198, C200, H204, and M207. E198 serves as a coordination point for Mg(2+).

It belongs to the cytochrome c oxidase subunit 2 family. As to quaternary structure, component of the cytochrome c oxidase (complex IV, CIV), a multisubunit enzyme composed of 14 subunits. The complex is composed of a catalytic core of 3 subunits MT-CO1, MT-CO2 and MT-CO3, encoded in the mitochondrial DNA, and 11 supernumerary subunits COX4I, COX5A, COX5B, COX6A, COX6B, COX6C, COX7A, COX7B, COX7C, COX8 and NDUFA4, which are encoded in the nuclear genome. The complex exists as a monomer or a dimer and forms supercomplexes (SCs) in the inner mitochondrial membrane with NADH-ubiquinone oxidoreductase (complex I, CI) and ubiquinol-cytochrome c oxidoreductase (cytochrome b-c1 complex, complex III, CIII), resulting in different assemblies (supercomplex SCI(1)III(2)IV(1) and megacomplex MCI(2)III(2)IV(2)). Found in a complex with TMEM177, COA6, COX18, COX20, SCO1 and SCO2. Interacts with TMEM177 in a COX20-dependent manner. Interacts with COX20. Interacts with COX16. Cu cation serves as cofactor.

It localises to the mitochondrion inner membrane. It catalyses the reaction 4 Fe(II)-[cytochrome c] + O2 + 8 H(+)(in) = 4 Fe(III)-[cytochrome c] + 2 H2O + 4 H(+)(out). In terms of biological role, component of the cytochrome c oxidase, the last enzyme in the mitochondrial electron transport chain which drives oxidative phosphorylation. The respiratory chain contains 3 multisubunit complexes succinate dehydrogenase (complex II, CII), ubiquinol-cytochrome c oxidoreductase (cytochrome b-c1 complex, complex III, CIII) and cytochrome c oxidase (complex IV, CIV), that cooperate to transfer electrons derived from NADH and succinate to molecular oxygen, creating an electrochemical gradient over the inner membrane that drives transmembrane transport and the ATP synthase. Cytochrome c oxidase is the component of the respiratory chain that catalyzes the reduction of oxygen to water. Electrons originating from reduced cytochrome c in the intermembrane space (IMS) are transferred via the dinuclear copper A center (CU(A)) of subunit 2 and heme A of subunit 1 to the active site in subunit 1, a binuclear center (BNC) formed by heme A3 and copper B (CU(B)). The BNC reduces molecular oxygen to 2 water molecules using 4 electrons from cytochrome c in the IMS and 4 protons from the mitochondrial matrix. The protein is Cytochrome c oxidase subunit 2 (MT-CO2) of Dasypus novemcinctus (Nine-banded armadillo).